The following is a 256-amino-acid chain: Adenylate kinase (256 aa).

Residue 49-54 (GAGKGT) participates in ATP binding. Positions 69–98 (ATGDMLRDQVEKKTPLGIAAKKIMDAGGLV) are NMP. Residues Thr70, Arg75, 96–98 (GLV), 125–128 (GFPR), and Gln132 each bind AMP. Residues 166-203 (GRLIHPASGRSYHKIFNPPKKAGIDDLTGEPLIQRSDD) are LID. ATP contacts are provided by residues Arg167 and 176 to 177 (SY). 2 residues coordinate AMP: Arg200 and Arg211. Gln239 is an ATP binding site.

Belongs to the adenylate kinase family. AK2 subfamily. As to quaternary structure, monomer.

The protein localises to the cytoplasm. It is found in the cytosol. Its subcellular location is the mitochondrion intermembrane space. The catalysed reaction is AMP + ATP = 2 ADP. Functionally, catalyzes the reversible transfer of the terminal phosphate group between ATP and AMP. Plays an important role in cellular energy homeostasis and in adenine nucleotide metabolism. Adenylate kinase activity is critical for regulation of the phosphate utilization and the AMP de novo biosynthesis pathways. The chain is Adenylate kinase from Coprinopsis cinerea (strain Okayama-7 / 130 / ATCC MYA-4618 / FGSC 9003) (Inky cap fungus).